A 270-amino-acid chain; its full sequence is Pyrroline-5-carboxylate reductase (270 aa).

The protein belongs to the pyrroline-5-carboxylate reductase family.

The protein localises to the cytoplasm. The catalysed reaction is L-proline + NADP(+) = (S)-1-pyrroline-5-carboxylate + NADPH + 2 H(+). It carries out the reaction L-proline + NAD(+) = (S)-1-pyrroline-5-carboxylate + NADH + 2 H(+). The protein operates within amino-acid biosynthesis; L-proline biosynthesis; L-proline from L-glutamate 5-semialdehyde: step 1/1. Its function is as follows. Catalyzes the reduction of 1-pyrroline-5-carboxylate (PCA) to L-proline. This is Pyrroline-5-carboxylate reductase from Methanosarcina acetivorans (strain ATCC 35395 / DSM 2834 / JCM 12185 / C2A).